A 412-amino-acid chain; its full sequence is Subtilisin-like protease 6 (412 aa).

The first 20 residues, 1 to 20 (MGFITKAIPIVLAALSTVNG), serve as a signal peptide directing secretion. Residues 21 to 127 (ARILEAGPHA…VRATTNGTNL (107 aa)) constitute a propeptide that is removed on maturation. An Inhibitor I9 domain is found at 36-120 (KYIVVMKKDV…FIEPDFVVRA (85 aa)). N123 and N126 each carry an N-linked (GlcNAc...) asparagine glycan. The Peptidase S8 domain occupies 135–412 (SWGLARVSTR…SKLIYNGSGK (278 aa)). Residues D167 and H198 each act as charge relay system in the active site. Residues N252, N264, and N325 are each glycosylated (N-linked (GlcNAc...) asparagine). S358 acts as the Charge relay system in catalysis. An N-linked (GlcNAc...) asparagine glycan is attached at N408.

It belongs to the peptidase S8 family.

It localises to the secreted. In terms of biological role, secreted subtilisin-like serine protease with keratinolytic activity that contributes to pathogenicity. The chain is Subtilisin-like protease 6 (SUB6) from Trichophyton verrucosum (Cattle ringworm fungus).